The sequence spans 988 residues: Squamosa promoter-binding-like protein 16 (988 aa).

Positions 52–79 (GTPVDLTRPSKKVRSGSPGSGGGGGGNY) are disordered. Positions 69-78 (PGSGGGGGGN) are enriched in gly residues. The SBP-type zinc finger occupies 79-156 (YPKCQVDNCK…DGHNRRRRKT (78 aa)). 8 residues coordinate Zn(2+): Cys-82, Cys-87, Cys-104, His-107, Cys-123, Cys-126, His-130, and Cys-142. The short motif at 139–155 (KRSCRRRLDGHNRRRRK) is the Bipartite nuclear localization signal element. Disordered regions lie at residues 240–262 (RKNP…SSPS) and 289–416 (GFGN…DTST). 3 stretches are compositionally biased toward polar residues: residues 250-262 (NPQN…SSPS), 301-311 (LTSSDHSATTS), and 327-358 (RTSS…FTSS). Low complexity predominate over residues 368–379 (ASSTKYYSSASS).

It depends on Zn(2+) as a cofactor.

Its subcellular location is the nucleus. Functionally, trans-acting factor that binds specifically to the consensus nucleotide sequence 5'-TNCGTACAA-3'. In Arabidopsis thaliana (Mouse-ear cress), this protein is Squamosa promoter-binding-like protein 16 (SPL16).